A 307-amino-acid chain; its full sequence is Metapyrocatechase (307 aa).

VOC domains follow at residues 7–122 (RPGH…LYAD) and 150–269 (RFDH…VFCG). Fe cation is bound by residues H153, H214, and E265.

It belongs to the extradiol ring-cleavage dioxygenase family. In terms of assembly, homotetramer. Fe(2+) is required as a cofactor.

The catalysed reaction is catechol + O2 = (2Z,4E)-2-hydroxy-6-oxohexa-2,4-dienoate + H(+). Its pathway is xenobiotic degradation; toluene degradation. The sequence is that of Metapyrocatechase (bztE) from Pseudomonas aeruginosa.